Reading from the N-terminus, the 495-residue chain is Protein SLENDER RICE1-LIKE 1 (495 aa).

The region spanning 77–449 (EEEEVAGIRL…RPLFSASAWE (373 aa)) is the GRAS domain. Positions 84–140 (IRLVHLLMSCAGAIEAGDHALASAQLADSHAALAAVSAASGIGRVAVHFTTALSRRL) are leucine repeat I (LRI). Positions 158–223 (YHHFYEACPY…GGPPFLRITG (66 aa)) are VHIID. Residues 189–193 (VHVID) carry the VHIID motif. The leucine repeat II (LRII) stretch occupies residues 237–269 (DVGLRLADLARSVRVRFSFRGVAANSLDEVRPW). A PFYRE region spans residues 279–371 (VAFNSVLQLH…EAYLQREICD (93 aa)). An LXXLL motif motif is present at residues 287-291 (LHRLL). The interval 374-449 (CGEGAARRER…RPLFSASAWE (76 aa)) is SAW. The interval 451-495 (AGDGGGDNNNNSNSNVSGSSGSDSNNSGSSNGKSSGARDGSSVCL) is disordered. Low complexity predominate over residues 458–485 (NNNNSNSNVSGSSGSDSNNSGSSNGKSS).

It belongs to the GRAS family. As to expression, expressed in elongating internodes and flowers. Expressed in floral meristem, stamen primordia and tapetum in developing anthers. Expressed at low levels in roots, shoot apices and rachis.

The protein localises to the nucleus. Functionally, probable transcriptional regulator that acts as a repressor of the gibberellin (GA) signaling pathway. Its repressive activity is weaker than that of SLR1. Its overexpression prevents the GA signaling pathway and induces a dwarf phenotype. In Oryza sativa subsp. japonica (Rice), this protein is Protein SLENDER RICE1-LIKE 1.